We begin with the raw amino-acid sequence, 316 residues long: Methionyl-tRNA formyltransferase (316 aa).

112-115 (SLLP) provides a ligand contact to (6S)-5,6,7,8-tetrahydrofolate.

Belongs to the Fmt family.

The catalysed reaction is L-methionyl-tRNA(fMet) + (6R)-10-formyltetrahydrofolate = N-formyl-L-methionyl-tRNA(fMet) + (6S)-5,6,7,8-tetrahydrofolate + H(+). Functionally, attaches a formyl group to the free amino group of methionyl-tRNA(fMet). The formyl group appears to play a dual role in the initiator identity of N-formylmethionyl-tRNA by promoting its recognition by IF2 and preventing the misappropriation of this tRNA by the elongation apparatus. The sequence is that of Methionyl-tRNA formyltransferase from Trichlorobacter lovleyi (strain ATCC BAA-1151 / DSM 17278 / SZ) (Geobacter lovleyi).